The primary structure comprises 297 residues: Guanylate kinase (297 aa).

One can recognise a Guanylate kinase-like domain in the interval 4–183 (GKMIIISGPS…AVAKITDVLH (180 aa)). 11-18 (GPSGVGKG) contributes to the ATP binding site. Positions 204 to 297 (EQIVKEKYMY…EQKHYNNDEF (94 aa)) are unknown.

It belongs to the guanylate kinase family.

It localises to the cytoplasm. It carries out the reaction GMP + ATP = GDP + ADP. Essential for recycling GMP and indirectly, cGMP. The chain is Guanylate kinase (gmk) from Mycoplasma mycoides subsp. mycoides SC (strain CCUG 32753 / NCTC 10114 / PG1).